A 358-amino-acid chain; its full sequence is Probable ABC transporter periplasmic-binding protein y4fP (358 aa).

Positions 1–46 are cleaved as a signal peptide; sequence MRNVIKLTWSRRKRSASLDKGENIMKLAFAFATAAIVVAAAFPALA.

This sequence belongs to the bacterial solute-binding protein 1 family.

It is found in the periplasm. Its function is as follows. Probably part of the binding-protein-dependent transport system y4fNOP. The polypeptide is Probable ABC transporter periplasmic-binding protein y4fP (Sinorhizobium fredii (strain NBRC 101917 / NGR234)).